Consider the following 283-residue polypeptide: MALLSFERKYRVRGGTLVGGDLFDFWVGPFYVGFFGVTTAFFALLGTILIFWGASQQGTFNPWLINIAPPDLSYGLGLAPLLEGGLWQIITICATGAFISWALREVEICRKLGMGYHVPFGFAAAIIAYMTLVIFRPLLMGAWGHGFPYGIFSHLDWVSNVGYAYLHFHYNPAHMLAVTLFFTTTLALALHGGLILSACNPEKGEEAKTPDHEDTFFRDFIGYSVGTLGIHRLGYLLAINAGLWSAICIIISGPVWTAGWPEWWNWWLDMPIWGEPIAVIGGM.

3 helical membrane passes run 33–56 (GFFG…GASQ), 85–113 (GLWQ…RKLG), and 116–141 (YHVP…LLMG). (7R,8Z)-bacteriochlorophyll b is bound by residues His154 and His174. A helical membrane pass occupies residues 171–200 (NPAHMLAVTLFFTTTLALALHGGLILSACN). His191 contacts Fe cation. A ubiquinone is bound at residue Phe217. Residues 226 to 252 (GTLGIHRLGYLLAINAGLWSAICIIIS) form a helical membrane-spanning segment. His231 lines the Fe cation pocket.

It belongs to the reaction center PufL/M/PsbA/D family. In terms of assembly, reaction center is composed of four bacteriochlorophylls, two bacteriopheophytins, two ubiquinones, one iron, and three highly hydrophobic polypeptide chains (designated L, M, and H).

The protein resides in the cellular chromatophore membrane. In terms of biological role, the reaction center is a membrane-bound complex that mediates the initial photochemical event in the electron transfer process of photosynthesis. This Roseobacter denitrificans (strain ATCC 33942 / OCh 114) (Erythrobacter sp. (strain OCh 114)) protein is Reaction center protein L chain (pufL).